We begin with the raw amino-acid sequence, 589 residues long: Alpha-1,2-mannosyltransferase MNN22 (589 aa).

Over 1 to 16 the chain is Cytoplasmic; the sequence is MGSIFKDGRRILVRPK. The helical transmembrane segment at 17-33 threads the bilayer; that stretch reads SLIICLCLISIIFTQLI. Topologically, residues 34–589 are extracellular; it reads RYQYQLIADE…NTIAWLGKKT (556 aa). The disordered stretch occupies residues 50-77; the sequence is EDHSSSQSLKNTKLNSTRSSSPISPPKS. Positions 54-71 are enriched in polar residues; the sequence is SSQSLKNTKLNSTRSSSP. N-linked (GlcNAc...) asparagine glycans are attached at residues asparagine 64, asparagine 332, and asparagine 530.

Belongs to the MNN1/MNT family.

The protein localises to the golgi apparatus membrane. Its pathway is protein modification; protein glycosylation. Its function is as follows. Alpha-1,2-mannosyltransferase required for cell wall integrity. Responsible for addition of the first alpha-1,2-linked mannose to form the branches on the mannan backbone of oligosaccharides. Addition of alpha-1,2-mannose is required for stabilization of the alpha-1,6-mannose backbone and hence regulates mannan fibril length; and is important for both immune recognition and virulence. The protein is Alpha-1,2-mannosyltransferase MNN22 (MNN22) of Candida albicans (strain SC5314 / ATCC MYA-2876) (Yeast).